Consider the following 68-residue polypeptide: Protein SlyX homolog (68 aa).

It belongs to the SlyX family.

This is Protein SlyX homolog from Brucella suis (strain ATCC 23445 / NCTC 10510).